The following is a 122-amino-acid chain: Ribosome-binding factor A (122 aa).

This sequence belongs to the RbfA family. Monomer. Binds 30S ribosomal subunits, but not 50S ribosomal subunits or 70S ribosomes.

It localises to the cytoplasm. Its function is as follows. One of several proteins that assist in the late maturation steps of the functional core of the 30S ribosomal subunit. Associates with free 30S ribosomal subunits (but not with 30S subunits that are part of 70S ribosomes or polysomes). Required for efficient processing of 16S rRNA. May interact with the 5'-terminal helix region of 16S rRNA. This chain is Ribosome-binding factor A, found in Cupriavidus pinatubonensis (strain JMP 134 / LMG 1197) (Cupriavidus necator (strain JMP 134)).